A 185-amino-acid polypeptide reads, in one-letter code: 3-hydroxyanthranilate 3,4-dioxygenase (185 aa).

R44 lines the O2 pocket. Residues H48, E54, and H95 each contribute to the Fe cation site. Position 54 (E54) interacts with substrate. Substrate is bound by residues R99 and E109. A divalent metal cation contacts are provided by C124, C127, C161, and C164.

This sequence belongs to the 3-HAO family. Fe(2+) serves as cofactor.

Its subcellular location is the cytoplasm. The enzyme catalyses 3-hydroxyanthranilate + O2 = (2Z,4Z)-2-amino-3-carboxymuconate 6-semialdehyde. The protein operates within cofactor biosynthesis; NAD(+) biosynthesis; quinolinate from L-kynurenine: step 3/3. In terms of biological role, catalyzes the oxidative ring opening of 3-hydroxyanthranilate to 2-amino-3-carboxymuconate semialdehyde, which spontaneously cyclizes to quinolinate. This chain is 3-hydroxyanthranilate 3,4-dioxygenase, found in Podospora anserina (strain S / ATCC MYA-4624 / DSM 980 / FGSC 10383) (Pleurage anserina).